The following is a 336-amino-acid chain: Melanoma-associated antigen B17 (336 aa).

A compositionally biased stretch (basic residues) spans 1-17 (MPRGQASKRRAREKRRQ). The tract at residues 1–108 (MPRGQASKRR…SSSESTGRDL (108 aa)) is disordered. Composition is skewed to low complexity over residues 39 to 54 (PSSS…QSFP) and 62 to 80 (SQRA…LTSS). Positions 90–103 (ESPNSFHGPSSSES) are enriched in polar residues. The 228-residue stretch at 109-336 (LNTKTGELVQ…RARASRSFQP (228 aa)) folds into the MAGE domain.

In Homo sapiens (Human), this protein is Melanoma-associated antigen B17 (MAGEB17).